A 297-amino-acid chain; its full sequence is 4-diphosphocytidyl-2-C-methyl-D-erythritol kinase (297 aa).

Active-site residues include Lys6 and Asp144.

Belongs to the GHMP kinase family. IspE subfamily.

It catalyses the reaction 4-CDP-2-C-methyl-D-erythritol + ATP = 4-CDP-2-C-methyl-D-erythritol 2-phosphate + ADP + H(+). Its pathway is isoprenoid biosynthesis; isopentenyl diphosphate biosynthesis via DXP pathway; isopentenyl diphosphate from 1-deoxy-D-xylulose 5-phosphate: step 3/6. Functionally, catalyzes the phosphorylation of the position 2 hydroxy group of 4-diphosphocytidyl-2C-methyl-D-erythritol. The sequence is that of 4-diphosphocytidyl-2-C-methyl-D-erythritol kinase from Leptospira interrogans serogroup Icterohaemorrhagiae serovar copenhageni (strain Fiocruz L1-130).